The primary structure comprises 364 residues: DNA polymerase IV (364 aa).

The UmuC domain maps to 6–186; it reads IIHIDMDAFY…LPIESFWGVG (181 aa). Residues aspartate 10 and aspartate 104 each coordinate Mg(2+). Glutamate 105 is a catalytic residue.

This sequence belongs to the DNA polymerase type-Y family. In terms of assembly, monomer. Mg(2+) is required as a cofactor.

The protein localises to the cytoplasm. It catalyses the reaction DNA(n) + a 2'-deoxyribonucleoside 5'-triphosphate = DNA(n+1) + diphosphate. Its function is as follows. Poorly processive, error-prone DNA polymerase involved in untargeted mutagenesis. Copies undamaged DNA at stalled replication forks, which arise in vivo from mismatched or misaligned primer ends. These misaligned primers can be extended by PolIV. Exhibits no 3'-5' exonuclease (proofreading) activity. May be involved in translesional synthesis, in conjunction with the beta clamp from PolIII. In Bacteroides fragilis (strain YCH46), this protein is DNA polymerase IV.